Here is a 336-residue protein sequence, read N- to C-terminus: MVQKEMINKKISQDNSFIQNNNLADFDFLDAKKNSEIKTVSTGSLHLDEALGTGGLPLGRIVELYGNESSGKTTVALHAVASFQKAGKVACYIDAEGALDLSYAKAIGIDLGKLLVAHPKHGENAFALMESLIKTNKVALIVVDSVAALIPKQELEGNMDDQTIGLHARMMSKGLRRVQSLLPESDTCLLFINQLREKPGVMFGNGEVTTGGRALKFYASMRMEAKRSELLKDRFGNYVGIKSKLTVSKNKVARPFGVAFLEIMFNRGIVYEHEVIELALKHNVVVRSDNAYSFKSQNIAIGKEKLFSVLAEKPELFEQIKQLTIKQIHSPPPPAS.

Residue 66-73 (GNESSGKT) coordinates ATP.

It belongs to the RecA family.

It is found in the cytoplasm. In terms of biological role, can catalyze the hydrolysis of ATP in the presence of single-stranded DNA, the ATP-dependent uptake of single-stranded DNA by duplex DNA, and the ATP-dependent hybridization of homologous single-stranded DNAs. It interacts with LexA causing its activation and leading to its autocatalytic cleavage. This Mycoplasma pneumoniae (strain ATCC 29342 / M129 / Subtype 1) (Mycoplasmoides pneumoniae) protein is Protein RecA.